We begin with the raw amino-acid sequence, 256 residues long: MAFTLTNKNVVFVAGLGGIGLDTSKELVKRDLKNLVILDRIENPAAIAELKAINPKVTVTFYPYDVTVPIAETTKLLKTIFAQLKTIDVLINGAGILDDHQIERTIAVNYTGLVNTTTAILDFWDKRKGGPGGIICNIGSVTGFNAIYQVPVYSGTKAAVVNFTSSLAKLAPITGVTAYTVNPGITRTTLVHKFNSWLDVEPQVAEKLLAHPTQPSLACAENFVKAIELNQNGAIWKLDLGTLEAIQWSKHWDSGI.

12-35 (FVAGLGGIGLDTSKELVKRDLKNL) is a binding site for NAD(+). Residue Ser140 coordinates substrate. Residue Tyr153 is the Proton acceptor of the active site.

Belongs to the short-chain dehydrogenases/reductases (SDR) family. As to quaternary structure, homodimer.

The enzyme catalyses a primary alcohol + NAD(+) = an aldehyde + NADH + H(+). It carries out the reaction a secondary alcohol + NAD(+) = a ketone + NADH + H(+). The protein is Alcohol dehydrogenase (Adh) of Drosophila teissieri (Fruit fly).